The chain runs to 506 residues: Maturase K (506 aa).

This sequence belongs to the intron maturase 2 family. MatK subfamily.

Its subcellular location is the plastid. The protein localises to the chloroplast. Its function is as follows. Usually encoded in the trnK tRNA gene intron. Probably assists in splicing its own and other chloroplast group II introns. This Arabis alpina (Alpine rock-cress) protein is Maturase K.